The primary structure comprises 717 residues: Polyribonucleotide nucleotidyltransferase (717 aa).

Mg(2+) is bound by residues aspartate 486 and aspartate 492. A KH domain is found at 553-612; the sequence is PRMITVKINPEKIRDVIGKGGSTIQALTKETGCTIDIQEDGTITIASTSSEGMAEAKRRI. Positions 622–690 constitute an S1 motif domain; the sequence is GKIYSGTVLK…EKGRMRLSIK (69 aa). Residues 690-717 form a disordered region; the sequence is KAAKAEEGDVPATAPQAPGAGDATSQQQ.

The protein belongs to the polyribonucleotide nucleotidyltransferase family. Requires Mg(2+) as cofactor.

The protein resides in the cytoplasm. It catalyses the reaction RNA(n+1) + phosphate = RNA(n) + a ribonucleoside 5'-diphosphate. Involved in mRNA degradation. Catalyzes the phosphorolysis of single-stranded polyribonucleotides processively in the 3'- to 5'-direction. This Ralstonia nicotianae (strain ATCC BAA-1114 / GMI1000) (Ralstonia solanacearum) protein is Polyribonucleotide nucleotidyltransferase.